The following is a 111-amino-acid chain: Ghrelin (111 aa).

The N-terminal stretch at 1–26 (MRQMKRTAYIILLVCVLALWMDSVQA) is a signal peptide. Positions 28-37 (SSFLSPSQRP) are enriched in polar residues. Residues 28-53 (SSFLSPSQRPQGKDKKPPRVGRRDSD) form a disordered region. A lipid anchor (O-decanoyl serine; alternate) is attached at Ser29. Ser29 carries the O-hexanoyl serine; alternate lipid modification. Residue Ser29 is the site of O-octanoyl serine; alternate attachment. Residues 38–53 (QGKDKKPPRVGRRDSD) show a composition bias toward basic and acidic residues. Position 47 is a valine amide (Val47). A propeptide spans 51–111 (DSDGILDLFM…DLLMDTPAKE (61 aa)) (removed in mature form).

The protein belongs to the motilin family. O-octanoylated by GOAT/MBOAT4. O-octanoylation or O-decanoylation is essential for activity. The O-decanoylated form ghrelin-21-C10 differs in the length of the carbon backbone of the carboxylic acid forming an ester bond with Ser-29. 44% of eel ghrelin is O-decanoylated. As to expression, highest levels in stomach and anterior intestine. Lower levels in posterior intestine, kidney and brain. Low levels in heart, head kidney and middle intestine.

It is found in the secreted. In terms of biological role, ligand for growth hormone secretagogue receptor type 1 (GHSR). Induces the release of growth hormone from the pituitary. Has an appetite-stimulating effect, induces adiposity and stimulates gastric acid secretion. Involved in growth regulation. The polypeptide is Ghrelin (ghrl) (Anguilla japonica (Japanese eel)).